Reading from the N-terminus, the 294-residue chain is Pyridoxal 5'-phosphate synthase subunit PdxS (294 aa).

D24 serves as a coordination point for D-ribose 5-phosphate. K81 functions as the Schiff-base intermediate with D-ribose 5-phosphate in the catalytic mechanism. G153 contacts D-ribose 5-phosphate. Residue R165 participates in D-glyceraldehyde 3-phosphate binding. D-ribose 5-phosphate is bound by residues G214 and 235 to 236; that span reads GS.

The protein belongs to the PdxS/SNZ family. In terms of assembly, in the presence of PdxT, forms a dodecamer of heterodimers.

It catalyses the reaction aldehydo-D-ribose 5-phosphate + D-glyceraldehyde 3-phosphate + L-glutamine = pyridoxal 5'-phosphate + L-glutamate + phosphate + 3 H2O + H(+). Its pathway is cofactor biosynthesis; pyridoxal 5'-phosphate biosynthesis. Catalyzes the formation of pyridoxal 5'-phosphate from ribose 5-phosphate (RBP), glyceraldehyde 3-phosphate (G3P) and ammonia. The ammonia is provided by the PdxT subunit. Can also use ribulose 5-phosphate and dihydroxyacetone phosphate as substrates, resulting from enzyme-catalyzed isomerization of RBP and G3P, respectively. This chain is Pyridoxal 5'-phosphate synthase subunit PdxS, found in Bacillus velezensis (strain DSM 23117 / BGSC 10A6 / LMG 26770 / FZB42) (Bacillus amyloliquefaciens subsp. plantarum).